Reading from the N-terminus, the 224-residue chain is Beta-casein (224 aa).

The signal sequence occupies residues 1–15; that stretch reads MKVLILACLVALALA. Residues Ser30, Ser32, Ser33, and Ser34 each carry the phosphoserine modification. Position 50 is a phosphoserine; in variant A1, variant A2, variant A3, variant B, variant E, variant F, variant G and variant H (Ser50).

It belongs to the beta-casein family. Mammary gland specific. Secreted in milk.

It localises to the secreted. In terms of biological role, important role in determination of the surface properties of the casein micelles. Casoparan acts as a macrophage activator, increasing the phagocytic activity of macrophages and peroxide release from macrophages. It also acts as a bradykinin-potentiating peptide. Its function is as follows. Casohypotensin acts as a bradykinin-potentiating peptide. Induces hypotension in rats. Acts as a strong competitive inhibitor of endo-oligopeptidase A. Functionally, antioxidant peptide has antioxidant activity. This is Beta-casein (CSN2) from Bos taurus (Bovine).